A 195-amino-acid polypeptide reads, in one-letter code: PAP fimbrial minor pilin protein (195 aa).

Residues 1-22 (MRLRFSVPLFFFGCVFVHGVFA) form the signal peptide. The cysteines at positions 58 and 97 are disulfide-linked.

Belongs to the fimbrial protein family.

The protein resides in the secreted. Its subcellular location is the fimbrium. In terms of biological role, fimbriae (also called pili), polar filaments radiating from the surface of the bacterium to a length of 0.5-1.5 micrometers and numbering 100-300 per cell, enable bacteria to colonize the epithelium of specific host organs. Functionally, papH seems to anchor the pilus to the bacterial cell. In addition the stoichiometric relationship between PapH and PapA determines the pilus length. This Escherichia coli protein is PAP fimbrial minor pilin protein (papH).